An 84-amino-acid chain; its full sequence is Large ribosomal subunit protein bL27 (84 aa).

A disordered region spans residues 1–22 (MAHKKAGGSTRNGRDSESKRLG).

The protein belongs to the bacterial ribosomal protein bL27 family.

The protein is Large ribosomal subunit protein bL27 of Shewanella loihica (strain ATCC BAA-1088 / PV-4).